A 146-amino-acid polypeptide reads, in one-letter code: U1 small nuclear ribonucleoprotein C (146 aa).

The Matrin-type zinc-finger motif lies at 4–36 (YYCDYCDTYLTHDSPSVRKTHCTGRKHRDNVKF). A disordered region spans residues 64–96 (NNPFAGGPSSAPPKPSGVSIPPPNMGAPPRPGM). The span at 73 to 96 (SAPPKPSGVSIPPPNMGAPPRPGM) shows a compositional bias: pro residues.

The protein belongs to the U1 small nuclear ribonucleoprotein C family. As to quaternary structure, U1 snRNP is composed of the 7 core Sm proteins B/B', D1, D2, D3, E, F and G that assemble in a heptameric protein ring on the Sm site of the small nuclear RNA to form the core snRNP, and at least 3 U1 snRNP-specific proteins U1-70K, U1-A and U1-C. U1-C interacts with U1 snRNA and the 5' splice-site region of the pre-mRNA.

Its subcellular location is the nucleus. Component of the spliceosomal U1 snRNP, which is essential for recognition of the pre-mRNA 5' splice-site and the subsequent assembly of the spliceosome. U1-C is directly involved in initial 5' splice-site recognition for both constitutive and regulated alternative splicing. The interaction with the 5' splice-site seems to precede base-pairing between the pre-mRNA and the U1 snRNA. Stimulates commitment or early (E) complex formation by stabilizing the base pairing of the 5' end of the U1 snRNA and the 5' splice-site region. In Drosophila pseudoobscura pseudoobscura (Fruit fly), this protein is U1 small nuclear ribonucleoprotein C.